The following is a 311-amino-acid chain: Putative prophage capsid protein YqbE (311 aa).

This sequence belongs to the encapsulin family. Family 3 subfamily.

Possibly a prophage capsid protein. This is Putative prophage capsid protein YqbE (yqbE) from Bacillus subtilis (strain 168).